A 1382-amino-acid chain; its full sequence is MKASAVLAPGILALLFTLVQGSDGECHEALAKSEMNVNMKYQLPNFTAETPIQNVVLHDHHIYLGATNYIYVLNDRDLQKVAEYKTGPVLEHPDCFPCQNCSDIANFSGGIWKDNINRALLVDTYYDDQLISCGSVNRGACQRHVLPPDNPADIRSEVHCMFSPQADEEPGQCPDCVVSALGAKVLLSVKDRFINFFVGNTLNSSYFPDHPLHSISVRRLKETQDGFKFLTDQSYIDVLPEFRDSYPIKYVHAFESNHFIYFLTVQRETLDAQTFHTRIIRFCSVDSGLHSYMEMPLECILTEKRRKRSTREEVFNILQAAYVSKPGAQLAKQIGASLNDDILFGVFAQSKPDSAEPMNRSAVCAFPIKYVNDFFNKIVNKNNVRCLQHFYGPHHEHCFNRTLLRNSSGCEVRKDEYRTEFTTALQRVDLFMGQFNQVLLTSISTFIKGDLTIANLGTSEGRFMQVVVSRSGSSTPHVNFQLDSHPVSPEVIVEHPLNQNGYTLVVTGKRITKIPLNGLGCGHFQSCSQCLSAPSFVQCGWCHDKCVRSEECPTGTWTQEICLPAIHKVFPTSAPLEGGTMLTICGWDFGFRRNNKFDLKKTKVLLGNESCTLTLSESTTNMLKCTVGPAMSEHFNMSIVISHGRGMTQYSTFSYVDPVITSISPSYGPKAGGTLLTLTGKYLNSGNSRHISIGGKTCTLKSVSNSILECYTPAQIISTEFPVKLKIDLANRETSSFSYQEDPVVYEIHPTKSFVSGGSTITGVGKNLNSVSVPRMVINVQEAGRNFTVACQHRSNSEIICCTTPSLQQLNLQLPLKTKAFFMLDGILSKYFDLIYVHNPVFKPFEKPVMISMGNENVLEIKGNDIDPEAVKGEVLKVGNKSCENIHSHSEAVLCTVPNDLLKLNSELNIEWKQAVSSTVLGKVIVQPDQNFTGLIVGVVSISIILLLLLGLFLWMKKRKQIKDLGSELVRYDARVHTPHLDRLVSARSVSPTTEMVSNESVDYRATFPEDQFPNSSQNGSCRQVQYPLTDLSPILTSGDSDISSPLLQNTVHIDLSALNPELVQAVQHVVIGPSSLIVHFNEVIGRGHFGCVYHGTLLDNDGKKIHCAVKSLNRITDIGEVSQFLTEGIIMKDFSHPNVLSLLGICLRSEGSPLVVLPYMKHGDLRNFIRNETHNPTVKDLIGFGLQVAKGMKYLASKKFVHRDLAARNCMLDEKFTVKVADFGLARDMYDKEYYSVHNKTGAKLPVKWMALESLQTQKFTTKSDVWSFGVLLWELMTRGAPPYPDVNTFDITVYLLQGRRLLQPEYCPDPLYEVMLKCWHPKAEMRPSFSELVSRISAIFSTFIGEHYVHVNATYVNVKCVAPYPSLLSSQDNINGEVDT.

The signal sequence occupies residues 1–24 (MKASAVLAPGILALLFTLVQGSDG). Residues 25 to 935 (ECHEALAKSE…VQPDQNFTGL (911 aa)) lie on the Extracellular side of the membrane. Residues 27–516 (HEALAKSEMN…TGKRITKIPL (490 aa)) form the Sema domain. N-linked (GlcNAc...) asparagine glycosylation is found at Asn45, Asn100, and Asn106. Intrachain disulfides connect Cys95-Cys101, Cys98-Cys160, Cys133-Cys141, and Cys173-Cys176. N-linked (GlcNAc...) asparagine glycans are attached at residues Asn203 and Asn359. 2 disulfides stabilise this stretch: Cys299–Cys364 and Cys386–Cys398. Asn400 and Asn406 each carry an N-linked (GlcNAc...) asparagine glycan. Intrachain disulfides connect Cys521/Cys539, Cys527/Cys562, Cys530/Cys546, and Cys542/Cys552. IPT/TIG domains lie at 564–656 (PAIH…FSYV), 658–740 (PVIT…FSYQ), and 743–837 (PVVY…LIYV). O-linked (Man) threonine glycosylation occurs at Thr583. 2 N-linked (GlcNAc...) asparagine glycosylation sites follow: Asn608 and Asn636. Residues Thr677 and Thr762 are each glycosylated (O-linked (Man) threonine). N-linked (GlcNAc...) asparagine glycosylation is found at Asn786, Asn880, and Asn931. A helical transmembrane segment spans residues 936-956 (IVGVVSISIILLLLLGLFLWM). The Cytoplasmic portion of the chain corresponds to 957-1382 (KKRKQIKDLG…QDNINGEVDT (426 aa)). Ser967 carries the phosphoserine modification. Thr978 is subject to Phosphothreonine. Residues Ser991, Ser998, and Ser1001 each carry the phosphoserine modification. The residue at position 1004 (Tyr1004) is a Phosphotyrosine. Residues 1079-1346 (VHFNEVIGRG…RISAIFSTFI (268 aa)) enclose the Protein kinase domain. ATP-binding positions include 1085-1093 (IGRGHFGCV) and Lys1111. Asp1205 functions as the Proton acceptor in the catalytic mechanism. The segment at 1213 to 1382 (LDEKFTVKVA…QDNINGEVDT (170 aa)) is interaction with RANBP9. Tyr1231 bears the Phosphotyrosine mark. A phosphotyrosine; by autocatalysis mark is found at Tyr1235 and Tyr1236. Thr1290 carries the phosphothreonine modification. The segment at 1321–1360 (WHPKAEMRPSFSELVSRISAIFSTFIGEHYVHVNATYVNV) is interaction with MUC20. Tyr1350 and Tyr1357 each carry phosphotyrosine; by autocatalysis. At Tyr1366 the chain carries Phosphotyrosine.

It belongs to the protein kinase superfamily. Tyr protein kinase family. In terms of assembly, heterodimer made of an alpha chain (50 kDa) and a beta chain (145 kDa) which are disulfide linked. Binds PLXNB1. Interacts when phosphorylated with downstream effectors including STAT3, PIK3R1, SRC, PCLG1, GRB2 and GAB1. Interacts with SPSB1, SPSB2 and SPSB4. Interacts with INPP5D/SHIP1. When phosphorylated at Tyr-1357, interacts with INPPL1/SHIP2. Interacts with RANBP9 and RANBP10, as well as SPSB1, SPSB2, SPSB3 and SPSB4. SPSB1 binding occurs in the presence and in the absence of HGF, however HGF treatment has a positive effect on this interaction. Interacts with MUC20; prevents interaction with GRB2 and suppresses hepatocyte growth factor-induced cell proliferation. Interacts with GRB10. Interacts with PTPN1 and PTPN2. Interacts with HSP90AA1 and HSP90AB1; the interaction suppresses MET kinase activity. Interacts with tensin TNS3. Interacts (when phosphorylated) with tensin TNS4 (via SH2 domain); the interaction increases MET protein stability by inhibiting MET endocytosis and subsequent lysosomal degradation. Autophosphorylated in response to ligand binding on Tyr-1235 and Tyr-1236 in the kinase domain leading to further phosphorylation of Tyr-1350 and Tyr-1357 in the C-terminal multifunctional docking site. Dephosphorylated by PTPRJ at Tyr-1350 and Tyr-1366. Dephosphorylated by PTPN1 and PTPN2. In terms of processing, ubiquitinated. Ubiquitination by CBL regulates the receptor stability and activity through proteasomal degradation. Post-translationally, O-mannosylation of IPT/TIG domains by TMEM260 is required for protein maturation. O-mannosylated residues are composed of single mannose glycans that are not elongated or modified.

The protein resides in the membrane. It catalyses the reaction L-tyrosyl-[protein] + ATP = O-phospho-L-tyrosyl-[protein] + ADP + H(+). In its inactive state, the C-terminal tail interacts with the catalytic domain and inhibits the kinase activity. Upon ligand binding, the C-terminal tail is displaced and becomes phosphorylated, thus increasing the kinase activity. Receptor tyrosine kinase that transduces signals from the extracellular matrix into the cytoplasm by binding to hepatocyte growth factor/HGF ligand. Regulates many physiological processes including proliferation, scattering, morphogenesis and survival. Ligand binding at the cell surface induces autophosphorylation of MET on its intracellular domain that provides docking sites for downstream signaling molecules. Following activation by ligand, interacts with the PI3-kinase subunit PIK3R1, PLCG1, SRC, GRB2, STAT3 or the adapter GAB1. Recruitment of these downstream effectors by MET leads to the activation of several signaling cascades including the RAS-ERK, PI3 kinase-AKT, or PLCgamma-PKC. The RAS-ERK activation is associated with the morphogenetic effects while PI3K/AKT coordinates prosurvival effects. During embryonic development, MET signaling plays a role in gastrulation, development and migration of muscles and neuronal precursors, angiogenesis and kidney formation. In adults, participates in wound healing as well as organ regeneration and tissue remodeling. Also promotes differentiation and proliferation of hematopoietic cells. In Microcebus murinus (Gray mouse lemur), this protein is Hepatocyte growth factor receptor (MET).